A 148-amino-acid polypeptide reads, in one-letter code: Transcriptional regulator MraZ (148 aa).

2 consecutive SpoVT-AbrB domains span residues 5–51 (ATSL…PLPA) and 80–123 (AEDV…SMEA).

This sequence belongs to the MraZ family. As to quaternary structure, forms oligomers.

It localises to the cytoplasm. Its subcellular location is the nucleoid. This chain is Transcriptional regulator MraZ, found in Methylobacillus flagellatus (strain ATCC 51484 / DSM 6875 / VKM B-1610 / KT).